Here is a 932-residue protein sequence, read N- to C-terminus: PMS1 protein homolog 1 (932 aa).

Residues 465 to 493 are disordered; sequence TQSENGNKDHIDESGENEEEAGLENSSEI. Residues 571–639 constitute a DNA-binding region (HMG box); that stretch reads IKKPMSASAL…RYNSQMKRAI (69 aa).

This sequence belongs to the DNA mismatch repair MutL/HexB family. Component of the DNA mismatch repair (MMR) complex composed at least of MSH2, MSH3, MSH6, PMS1 and MLH1. The MutL-beta complex is a heterodimer of PMS1 and MLH1. Interacts with MCM9.

Its subcellular location is the nucleus. Functionally, probably involved in the repair of mismatches in DNA. The polypeptide is PMS1 protein homolog 1 (PMS1) (Homo sapiens (Human)).